We begin with the raw amino-acid sequence, 280 residues long: 3-methyl-2-oxobutanoate hydroxymethyltransferase (280 aa).

The Mg(2+) site is built by D45 and D84. Residues 45–46 (DS), D84, and K114 contribute to the 3-methyl-2-oxobutanoate site. E116 provides a ligand contact to Mg(2+). E183 acts as the Proton acceptor in catalysis.

This sequence belongs to the PanB family. Homodecamer; pentamer of dimers. The cofactor is Mg(2+).

The protein localises to the cytoplasm. The enzyme catalyses 3-methyl-2-oxobutanoate + (6R)-5,10-methylene-5,6,7,8-tetrahydrofolate + H2O = 2-dehydropantoate + (6S)-5,6,7,8-tetrahydrofolate. Its pathway is cofactor biosynthesis; (R)-pantothenate biosynthesis; (R)-pantoate from 3-methyl-2-oxobutanoate: step 1/2. In terms of biological role, catalyzes the reversible reaction in which hydroxymethyl group from 5,10-methylenetetrahydrofolate is transferred onto alpha-ketoisovalerate to form ketopantoate. The protein is 3-methyl-2-oxobutanoate hydroxymethyltransferase of Clostridium kluyveri (strain ATCC 8527 / DSM 555 / NBRC 12016 / NCIMB 10680 / K1).